A 458-amino-acid chain; its full sequence is UDP-N-acetylmuramoylalanine--D-glutamate ligase (458 aa).

Gly-124–Thr-130 is a binding site for ATP.

It belongs to the MurCDEF family.

Its subcellular location is the cytoplasm. It carries out the reaction UDP-N-acetyl-alpha-D-muramoyl-L-alanine + D-glutamate + ATP = UDP-N-acetyl-alpha-D-muramoyl-L-alanyl-D-glutamate + ADP + phosphate + H(+). It functions in the pathway cell wall biogenesis; peptidoglycan biosynthesis. In terms of biological role, cell wall formation. Catalyzes the addition of glutamate to the nucleotide precursor UDP-N-acetylmuramoyl-L-alanine (UMA). This Clostridium botulinum (strain Kyoto / Type A2) protein is UDP-N-acetylmuramoylalanine--D-glutamate ligase.